The primary structure comprises 285 residues: Polyamine aminopropyltransferase (285 aa).

In terms of domain architecture, PABS spans 5–241 (DNWYIEHFQP…GWWSVTMASK (237 aa)). Glutamine 35 contacts S-methyl-5'-thioadenosine. Residues histidine 66 and aspartate 90 each coordinate spermidine. S-methyl-5'-thioadenosine is bound by residues aspartate 110 and 141–142 (DG). The active-site Proton acceptor is the aspartate 160. Residue 160-163 (DSTD) participates in spermidine binding. Proline 167 is an S-methyl-5'-thioadenosine binding site.

It belongs to the spermidine/spermine synthase family. Homodimer or homotetramer.

Its subcellular location is the cytoplasm. It carries out the reaction S-adenosyl 3-(methylsulfanyl)propylamine + putrescine = S-methyl-5'-thioadenosine + spermidine + H(+). It participates in amine and polyamine biosynthesis; spermidine biosynthesis; spermidine from putrescine: step 1/1. In terms of biological role, catalyzes the irreversible transfer of a propylamine group from the amino donor S-adenosylmethioninamine (decarboxy-AdoMet) to putrescine (1,4-diaminobutane) to yield spermidine. The chain is Polyamine aminopropyltransferase from Xanthomonas campestris pv. campestris (strain 8004).